Consider the following 696-residue polypeptide: Elongation factor G (696 aa).

One can recognise a tr-type G domain in the interval 8-286 (EDVRNIGIAA…AVVAYLPAPT (279 aa)). Residues 17–24 (AHIDAGKT), 81–85 (DTPGH), and 135–138 (NKMD) contribute to the GTP site.

This sequence belongs to the TRAFAC class translation factor GTPase superfamily. Classic translation factor GTPase family. EF-G/EF-2 subfamily.

It is found in the cytoplasm. Its function is as follows. Catalyzes the GTP-dependent ribosomal translocation step during translation elongation. During this step, the ribosome changes from the pre-translocational (PRE) to the post-translocational (POST) state as the newly formed A-site-bound peptidyl-tRNA and P-site-bound deacylated tRNA move to the P and E sites, respectively. Catalyzes the coordinated movement of the two tRNA molecules, the mRNA and conformational changes in the ribosome. This chain is Elongation factor G, found in Sulfurimonas denitrificans (strain ATCC 33889 / DSM 1251) (Thiomicrospira denitrificans (strain ATCC 33889 / DSM 1251)).